The following is a 268-amino-acid chain: 4-hydroxy-tetrahydrodipicolinate reductase (268 aa).

Residue 8–13 participates in NAD(+) binding; the sequence is GAAGRM. Arg-36 provides a ligand contact to NADP(+). Residues 99–101 and 123–126 each bind NAD(+); these read GTT and AANF. His-156 serves as the catalytic Proton donor/acceptor. Position 157 (His-157) interacts with (S)-2,3,4,5-tetrahydrodipicolinate. Catalysis depends on Lys-160, which acts as the Proton donor. 166 to 167 is a binding site for (S)-2,3,4,5-tetrahydrodipicolinate; sequence GT.

This sequence belongs to the DapB family.

It is found in the cytoplasm. It catalyses the reaction (S)-2,3,4,5-tetrahydrodipicolinate + NAD(+) + H2O = (2S,4S)-4-hydroxy-2,3,4,5-tetrahydrodipicolinate + NADH + H(+). The enzyme catalyses (S)-2,3,4,5-tetrahydrodipicolinate + NADP(+) + H2O = (2S,4S)-4-hydroxy-2,3,4,5-tetrahydrodipicolinate + NADPH + H(+). The protein operates within amino-acid biosynthesis; L-lysine biosynthesis via DAP pathway; (S)-tetrahydrodipicolinate from L-aspartate: step 4/4. Functionally, catalyzes the conversion of 4-hydroxy-tetrahydrodipicolinate (HTPA) to tetrahydrodipicolinate. This Pseudomonas fluorescens (strain SBW25) protein is 4-hydroxy-tetrahydrodipicolinate reductase.